Here is a 388-residue protein sequence, read N- to C-terminus: Chorismate synthase (388 aa).

NADP(+)-binding residues include arginine 40 and arginine 46. FMN-binding positions include 131-133 (RSS), 252-253 (NA), glycine 296, 311-315 (KPIPT), and arginine 337.

It belongs to the chorismate synthase family. In terms of assembly, homotetramer. The cofactor is FMNH2.

It catalyses the reaction 5-O-(1-carboxyvinyl)-3-phosphoshikimate = chorismate + phosphate. The protein operates within metabolic intermediate biosynthesis; chorismate biosynthesis; chorismate from D-erythrose 4-phosphate and phosphoenolpyruvate: step 7/7. Functionally, catalyzes the anti-1,4-elimination of the C-3 phosphate and the C-6 proR hydrogen from 5-enolpyruvylshikimate-3-phosphate (EPSP) to yield chorismate, which is the branch point compound that serves as the starting substrate for the three terminal pathways of aromatic amino acid biosynthesis. This reaction introduces a second double bond into the aromatic ring system. This Limosilactobacillus fermentum (strain NBRC 3956 / LMG 18251) (Lactobacillus fermentum) protein is Chorismate synthase.